The primary structure comprises 341 residues: Phosphate acyltransferase (341 aa).

The protein belongs to the PlsX family. As to quaternary structure, homodimer. Probably interacts with PlsY.

The protein localises to the cytoplasm. The catalysed reaction is a fatty acyl-[ACP] + phosphate = an acyl phosphate + holo-[ACP]. It functions in the pathway lipid metabolism; phospholipid metabolism. Its function is as follows. Catalyzes the reversible formation of acyl-phosphate (acyl-PO(4)) from acyl-[acyl-carrier-protein] (acyl-ACP). This enzyme utilizes acyl-ACP as fatty acyl donor, but not acyl-CoA. This chain is Phosphate acyltransferase, found in Idiomarina loihiensis (strain ATCC BAA-735 / DSM 15497 / L2-TR).